Here is a 518-residue protein sequence, read N- to C-terminus: Membrane-bound glycerophospholipid O-acyltransferase 2 (518 aa).

The next 6 membrane-spanning stretches (helical) occupy residues 21–41 (PVDQVNFVVCQLFALLAAIWF), 60–80 (TLLGLYLALFCFGWYALHFVI), 87–107 (YLMIIIGVENMHKYCFVFALG), 183–203 (FMGILAGPLCSYKDYITFIEG), 230–250 (IAVAQKLLICGLSLLFHMTIT), and 267–283 (ASWPVRVFYLYLSLMAA). Catalysis depends on residues Asn341 and His372. 3 consecutive transmembrane segments (helical) span residues 365–385 (FILSAIWHGVYPGYYLTFLTG), 415–435 (IITWMTTQVAISYTVVPFVLL), and 443–463 (FYSSCYFCLHIASILVLLVFP).

The protein belongs to the membrane-bound acyltransferase family.

It is found in the endoplasmic reticulum membrane. It catalyses the reaction a 1-acyl-sn-glycero-3-phosphocholine + an acyl-CoA = a 1,2-diacyl-sn-glycero-3-phosphocholine + CoA. The enzyme catalyses a 1-acyl-sn-glycero-3-phosphoethanolamine + an acyl-CoA = a 1,2-diacyl-sn-glycero-3-phosphoethanolamine + CoA. The catalysed reaction is a 1-acyl-sn-glycero-3-phosphate + an acyl-CoA = a 1,2-diacyl-sn-glycero-3-phosphate + CoA. It carries out the reaction (9Z)-hexadecenoyl-CoA + 1-hexadecanoyl-sn-glycero-3-phosphocholine = 1-hexadecanoyl-2-(9Z-hexadecenoyl)-sn-glycero-3-phosphocholine + CoA. It catalyses the reaction 1-hexadecanoyl-sn-glycero-3-phosphoethanolamine + (9Z)-octadecenoyl-CoA = 1-hexadecanoyl-2-(9Z-octadecenoyl)-sn-glycero-3-phosphoethanolamine + CoA. The enzyme catalyses 1-hexadecanoyl-sn-glycero-3-phosphoethanolamine + (9Z)-hexadecenoyl-CoA = 1-hexadecanoyl-2-(9Z)-hexadecenoyl-sn-glycero-3-phosphoethanolamine + CoA. The catalysed reaction is 1-(9Z-octadecenoyl)-sn-glycero-3-phospho-L-serine + hexadecanoyl-CoA = 1-(9Z)-octadecenoyl-2-hexadecanoyl-sn-glycero-3-phosphoserine + CoA. It carries out the reaction (9Z,12Z)-octadecadienoyl-CoA + 1-hexadecanoyl-sn-glycero-3-phosphocholine = 1-hexadecanoyl-2-(9Z,12Z-octadecadienoyl)-sn-glycero-3-phosphocholine + CoA. It catalyses the reaction 1-hexadecanoyl-sn-glycero-3-phosphocholine + (9Z)-octadecenoyl-CoA = 1-hexadecanoyl-2-(9Z-octadecenoyl)-sn-glycero-3-phosphocholine + CoA. The enzyme catalyses 1-hexadecanoyl-sn-glycero-3-phosphate + (9Z)-hexadecenoyl-CoA = 1-hexadecanoyl-2-[(9Z)-hexadec-9-enoyl]-sn-glycero-3-phosphate + CoA. The catalysed reaction is 1-hexadecanoyl-sn-glycero-3-phosphate + (9Z)-octadecenoyl-CoA = 1-hexadecanoyl-2-(9Z-octadecenoyl)-sn-glycero-3-phosphate + CoA. It carries out the reaction a 1-O-(1Z-alkenyl)-sn-glycero-3-phosphocholine + (9Z)-octadecenoyl-CoA = 1-O-(1Z)-alkenyl-2-(9Z)-octadecenoyl-sn-glycero-3-phosphocholine + CoA. It catalyses the reaction a 1-O-(1Z-alkenyl)-sn-glycero-3-phosphoethanolamine + (9Z)-octadecenoyl-CoA = 1-O-(1Z)-alkenyl-2-(9Z)-octadecenoyl-sn-glycero-3-phosphoethanolamine + CoA. The enzyme catalyses 1-octadecanoyl-sn-glycero-3-phosphoethanolamine + (9Z)-octadecenoyl-CoA = 1-octadecanoyl-2-(9Z-octadecenoyl)-sn-glycero-3-phosphoethanolamine + CoA. The catalysed reaction is 1-octadecanoyl-sn-glycero-3-phosphocholine + (9Z)-octadecenoyl-CoA = 1-octadecanoyl-2-(9Z-octadecenoyl)-sn-glycero-3-phosphocholine + CoA. It carries out the reaction 1-(9Z-octadecenoyl)-sn-glycero-3-phosphoethanolamine + (9Z)-octadecenoyl-CoA = 1,2-di-(9Z-octadecenoyl)-sn-glycero-3-phosphoethanolamine + CoA. Its pathway is lipid metabolism; phospholipid metabolism. Acyltransferase which catalyzes the transfer of an acyl group from an acyl-CoA to a lysophospholipid leading to the production of a phospholipid and participates in the reacylation step of the phospholipid remodeling pathway also known as the Lands cycle. May catalyze preferentially the acylation of lysophosphatidylethanolamine (1-acyl-sn-glycero-3-phosphoethanolamine or LPE) and lysophosphatidic acid (LPA) and to a lesser extend lysophosphatidylcholine (LPC) and lysophosphatidylserine (LPS). Prefers oleoyl-CoA as the acyl donor. The polypeptide is Membrane-bound glycerophospholipid O-acyltransferase 2 (Gallus gallus (Chicken)).